We begin with the raw amino-acid sequence, 247 residues long: DNA polymerase epsilon subunit D (247 aa).

Positions 128–247 (KKHKADKKVP…EGQNSSDDDS (120 aa)) are disordered. Positions 150–159 (RLKDNDEQII) are enriched in basic and acidic residues. Acidic residues-rich tracts occupy residues 165-188 (ADME…NDED), 196-215 (EEEE…EVEE), and 224-247 (EEDE…DDDS).

In terms of assembly, heterotetramer. Consists of four subunits: POL2, DPB2, DPB3 and DPB4.

The protein localises to the nucleus. Its function is as follows. As accessory component of the DNA polymerase epsilon (DNA polymerase II) participates in chromosomal DNA replication. In Debaryomyces hansenii (strain ATCC 36239 / CBS 767 / BCRC 21394 / JCM 1990 / NBRC 0083 / IGC 2968) (Yeast), this protein is DNA polymerase epsilon subunit D (DPB4).